Reading from the N-terminus, the 317-residue chain is Heme-binding protein HMX1 (317 aa).

At 1–289 (MEDSSNTIIP…FNKDSATRRA (289 aa)) the chain is on the cytoplasmic side. A helical; Anchor for type IV membrane protein transmembrane segment spans residues 290–310 (LHTVMLLVLSIIAIWVLYFLV).

It depends on heme as a cofactor.

It is found in the endoplasmic reticulum membrane. Plays an important role in the degradation of heme under conditions of iron deprivation. This Saccharomyces cerevisiae (strain ATCC 204508 / S288c) (Baker's yeast) protein is Heme-binding protein HMX1 (HMX1).